The primary structure comprises 314 residues: MEWSEVEVHTTNEAVEPVANVLTEFGAAGVSIEDVADFLREREDKFGEIYALKREDYPEDGVIIKAYFLKTTEFVEQIPEIEQTLKNLTTFDIPLGKFQFVVNDVDDEEWATAWKKYYHPVQITDRITIVPSWESYTPSANEIIIELDPGMAFGTGTHPTTQLCIRALSDYLQPGDELIDVGTGSGVLSIASAKLGAKSILATDLDEIATRAAEENIRLNKTENIITVKQNNLLQDINKSDVDIVVANILAEVILLFPEDVYKALKPGGIFIASGIIEDKAKVVEEALKNAGLIIEKIEQQGDWVAIISKRGVE.

S-adenosyl-L-methionine-binding residues include threonine 161, glycine 182, aspartate 204, and asparagine 248.

Belongs to the methyltransferase superfamily. PrmA family.

The protein resides in the cytoplasm. The enzyme catalyses L-lysyl-[protein] + 3 S-adenosyl-L-methionine = N(6),N(6),N(6)-trimethyl-L-lysyl-[protein] + 3 S-adenosyl-L-homocysteine + 3 H(+). Methylates ribosomal protein L11. The polypeptide is Ribosomal protein L11 methyltransferase (Listeria innocua serovar 6a (strain ATCC BAA-680 / CLIP 11262)).